The sequence spans 259 residues: 5'-nucleotidase SurE (259 aa).

The a divalent metal cation site is built by Asp8, Asp9, Ser39, and Asn93.

It belongs to the SurE nucleotidase family. The cofactor is a divalent metal cation.

It localises to the cytoplasm. The enzyme catalyses a ribonucleoside 5'-phosphate + H2O = a ribonucleoside + phosphate. Its function is as follows. Nucleotidase that shows phosphatase activity on nucleoside 5'-monophosphates. The sequence is that of 5'-nucleotidase SurE from Thermococcus kodakarensis (strain ATCC BAA-918 / JCM 12380 / KOD1) (Pyrococcus kodakaraensis (strain KOD1)).